A 426-amino-acid polypeptide reads, in one-letter code: MNALNIVEYTHNLGVQAKVASAQMARASAAVKSRALLALARLLRENVEPLQTDNARDLDRAVANGLSAPMVDRLRLTPKVLETCAQGCEQLASMADVIGEIIGMKQMPSGIRVGQMRVPIGVFGMIYESRPNVTIEAASLSIKSGNACILRGGSEAIDSNKALAALVARALAEAGLPEHGVQLVQTTDREAVGQLIAMPDYVDVIIPRGGKGLIERISREAKVPVIKHLDGNCHTYVDDPCDIAMAVKVADNAKTNKYSPCNASESLLVARGVAAEFLPQIGAIYAAKGVEMRGCPESLAILKSVAGAQLAEATEQDWSEEYLAPIISVKIVAGVDEAIAHINRYSSHHTDAILTRDHMHAQRFLREVDSASVMVNASTRFADGFEYGLGAEIGISTDKFHARGPVGIEGLTSLKYVVLGEGEVRT.

This sequence belongs to the gamma-glutamyl phosphate reductase family.

It is found in the cytoplasm. It catalyses the reaction L-glutamate 5-semialdehyde + phosphate + NADP(+) = L-glutamyl 5-phosphate + NADPH + H(+). The protein operates within amino-acid biosynthesis; L-proline biosynthesis; L-glutamate 5-semialdehyde from L-glutamate: step 2/2. Its function is as follows. Catalyzes the NADPH-dependent reduction of L-glutamate 5-phosphate into L-glutamate 5-semialdehyde and phosphate. The product spontaneously undergoes cyclization to form 1-pyrroline-5-carboxylate. In Delftia acidovorans (strain DSM 14801 / SPH-1), this protein is Gamma-glutamyl phosphate reductase.